Consider the following 296-residue polypeptide: Ribosomal RNA small subunit methyltransferase H (296 aa).

S-adenosyl-L-methionine-binding positions include 41–43 (GGY), Asp59, Phe86, Asp104, and Gln111.

This sequence belongs to the methyltransferase superfamily. RsmH family.

It localises to the cytoplasm. The enzyme catalyses cytidine(1402) in 16S rRNA + S-adenosyl-L-methionine = N(4)-methylcytidine(1402) in 16S rRNA + S-adenosyl-L-homocysteine + H(+). Its function is as follows. Specifically methylates the N4 position of cytidine in position 1402 (C1402) of 16S rRNA. The chain is Ribosomal RNA small subunit methyltransferase H from Neorickettsia sennetsu (strain ATCC VR-367 / Miyayama) (Ehrlichia sennetsu).